Consider the following 339-residue polypeptide: Anthranilate phosphoribosyltransferase (339 aa).

Residues Gly-81, 84 to 85 (GD), Ser-89, 91 to 94 (NVST), 109 to 117 (KHGNRALSS), and Ala-121 each bind 5-phospho-alpha-D-ribose 1-diphosphate. Gly-81 is a binding site for anthranilate. Ser-93 is a Mg(2+) binding site. Asn-112 is an anthranilate binding site. An anthranilate-binding site is contributed by Arg-167. Asp-226 and Glu-227 together coordinate Mg(2+).

This sequence belongs to the anthranilate phosphoribosyltransferase family. In terms of assembly, homodimer. Mg(2+) is required as a cofactor.

The enzyme catalyses N-(5-phospho-beta-D-ribosyl)anthranilate + diphosphate = 5-phospho-alpha-D-ribose 1-diphosphate + anthranilate. The protein operates within amino-acid biosynthesis; L-tryptophan biosynthesis; L-tryptophan from chorismate: step 2/5. Its function is as follows. Catalyzes the transfer of the phosphoribosyl group of 5-phosphorylribose-1-pyrophosphate (PRPP) to anthranilate to yield N-(5'-phosphoribosyl)-anthranilate (PRA). This is Anthranilate phosphoribosyltransferase from Rhodopseudomonas palustris (strain BisA53).